Here is a 200-residue protein sequence, read N- to C-terminus: Ubiquinol-cytochrome-c reductase complex assembly factor 1 (200 aa).

The protein belongs to the CBP3 family.

It localises to the mitochondrion inner membrane. Its function is as follows. Required for the assembly of the ubiquinol-cytochrome c reductase complex (mitochondrial respiratory chain complex III or cytochrome b-c1 complex). May be involved in cytochrome b translation and/or stability. The chain is Ubiquinol-cytochrome-c reductase complex assembly factor 1 (uqcc1) from Xenopus laevis (African clawed frog).